The following is a 393-amino-acid chain: uncharacterized protein (393 aa).

The [4Fe-4S] cluster site is built by Cys-9, Cys-15, Cys-18, and Cys-97. Residues Gln-231, Tyr-258, Glu-279, and Asp-325 each coordinate S-adenosyl-L-methionine. The active-site Nucleophile is the Cys-352.

Belongs to the class I-like SAM-binding methyltransferase superfamily. RNA M5U methyltransferase family.

This is an uncharacterized protein from Leptospira interrogans serogroup Icterohaemorrhagiae serovar Lai (strain 56601).